We begin with the raw amino-acid sequence, 341 residues long: Glycerol-3-phosphate dehydrogenase [NAD(P)+] (341 aa).

4 residues coordinate NADPH: S15, W16, R36, and K110. Residues K110, G139, and S141 each coordinate sn-glycerol 3-phosphate. NADPH is bound at residue A143. 5 residues coordinate sn-glycerol 3-phosphate: K194, D247, S257, R258, and N259. Catalysis depends on K194, which acts as the Proton acceptor. R258 serves as a coordination point for NADPH. NADPH is bound by residues V282 and E284.

This sequence belongs to the NAD-dependent glycerol-3-phosphate dehydrogenase family.

It localises to the cytoplasm. It carries out the reaction sn-glycerol 3-phosphate + NAD(+) = dihydroxyacetone phosphate + NADH + H(+). The catalysed reaction is sn-glycerol 3-phosphate + NADP(+) = dihydroxyacetone phosphate + NADPH + H(+). It participates in membrane lipid metabolism; glycerophospholipid metabolism. Its function is as follows. Catalyzes the reduction of the glycolytic intermediate dihydroxyacetone phosphate (DHAP) to sn-glycerol 3-phosphate (G3P), the key precursor for phospholipid synthesis. The polypeptide is Glycerol-3-phosphate dehydrogenase [NAD(P)+] (Stenotrophomonas maltophilia (strain K279a)).